The sequence spans 953 residues: Translation initiation factor IF-2 (953 aa).

2 disordered regions span residues 48–248 (SSFS…AELA) and 279–363 (TKLK…TERK). Basic and acidic residues-rich tracts occupy residues 80–89 (TGSEHAEKTQ), 98–111 (FKAE…EQAA), and 140–188 (QGDK…ENHK). Over residues 191–207 (RFTNQKKQGRQEPQSKS) the composition is skewed to polar residues. Basic and acidic residues predominate over residues 229 to 248 (RQSETRFRAQQEAKRLAELA). Polar residues predominate over residues 282–291 (KSSNISAKST). Residues 300–317 (ARPEKNRELTHHSQEGQK) show a composition bias toward basic and acidic residues. Residues 322-338 (SWNSQNQVRNQKNSNWN) are compositionally biased toward low complexity. Over residues 339–348 (KNKKTKKGKN) the composition is skewed to basic residues. The tr-type G domain maps to 454–623 (ERAPVVTIMG…LLVAEVEELK (170 aa)). The tract at residues 463 to 470 (GHVDHGKT) is G1. 463-470 (GHVDHGKT) contributes to the GTP binding site. Positions 488-492 (GITQH) are G2. Residues 509-512 (DTPG) are G3. GTP contacts are provided by residues 509 to 513 (DTPGH) and 563 to 566 (NKID). The G4 stretch occupies residues 563-566 (NKID). The tract at residues 599–601 (SAK) is G5.

Belongs to the TRAFAC class translation factor GTPase superfamily. Classic translation factor GTPase family. IF-2 subfamily.

It localises to the cytoplasm. One of the essential components for the initiation of protein synthesis. Protects formylmethionyl-tRNA from spontaneous hydrolysis and promotes its binding to the 30S ribosomal subunits. Also involved in the hydrolysis of GTP during the formation of the 70S ribosomal complex. This Streptococcus pyogenes serotype M18 (strain MGAS8232) protein is Translation initiation factor IF-2.